Reading from the N-terminus, the 276-residue chain is Ribosomal RNA small subunit methyltransferase A (276 aa).

Residues asparagine 15, leucine 17, glycine 42, glutamate 63, aspartate 88, and asparagine 111 each coordinate S-adenosyl-L-methionine.

Belongs to the class I-like SAM-binding methyltransferase superfamily. rRNA adenine N(6)-methyltransferase family. RsmA subfamily.

It is found in the cytoplasm. It carries out the reaction adenosine(1518)/adenosine(1519) in 16S rRNA + 4 S-adenosyl-L-methionine = N(6)-dimethyladenosine(1518)/N(6)-dimethyladenosine(1519) in 16S rRNA + 4 S-adenosyl-L-homocysteine + 4 H(+). Functionally, specifically dimethylates two adjacent adenosines (A1518 and A1519) in the loop of a conserved hairpin near the 3'-end of 16S rRNA in the 30S particle. May play a critical role in biogenesis of 30S subunits. The protein is Ribosomal RNA small subunit methyltransferase A of Geobacter sulfurreducens (strain ATCC 51573 / DSM 12127 / PCA).